Here is a 371-residue protein sequence, read N- to C-terminus: Chorismate synthase (371 aa).

NADP(+) contacts are provided by Arg48 and Arg54. Residues 132–134, 244–245, Gly289, 304–308, and Arg330 each bind FMN; these read RSS, NA, and KPTSS.

This sequence belongs to the chorismate synthase family. Homotetramer. Requires FMNH2 as cofactor.

It carries out the reaction 5-O-(1-carboxyvinyl)-3-phosphoshikimate = chorismate + phosphate. Its pathway is metabolic intermediate biosynthesis; chorismate biosynthesis; chorismate from D-erythrose 4-phosphate and phosphoenolpyruvate: step 7/7. Catalyzes the anti-1,4-elimination of the C-3 phosphate and the C-6 proR hydrogen from 5-enolpyruvylshikimate-3-phosphate (EPSP) to yield chorismate, which is the branch point compound that serves as the starting substrate for the three terminal pathways of aromatic amino acid biosynthesis. This reaction introduces a second double bond into the aromatic ring system. This Methylobacterium nodulans (strain LMG 21967 / CNCM I-2342 / ORS 2060) protein is Chorismate synthase.